The following is a 171-amino-acid chain: Dual specificity protein phosphatase OPG106 (171 aa).

Belongs to the protein-tyrosine phosphatase family. Non-receptor class dual specificity subfamily. Homodimer.

The protein localises to the virion. Its subcellular location is the host cytoplasm. It catalyses the reaction O-phospho-L-tyrosyl-[protein] + H2O = L-tyrosyl-[protein] + phosphate. The enzyme catalyses O-phospho-L-seryl-[protein] + H2O = L-seryl-[protein] + phosphate. Functionally, serine/tyrosine phosphatase which down-regulates cellular antiviral response by dephosphorylating activated host STAT1 and blocking interferon (IFN)-stimulated innate immune responses. Dephosphorylates the OPG144 protein. This is Dual specificity protein phosphatase OPG106 (OPG106) from Monkeypox virus.